The following is a 395-amino-acid chain: ATP synthase subunit beta, chloroplastic (395 aa).

Residue 72–79 coordinates ATP; sequence GGAGVGKT.

The protein belongs to the ATPase alpha/beta chains family. In terms of assembly, F-type ATPases have 2 components, CF(1) - the catalytic core - and CF(0) - the membrane proton channel. CF(1) has five subunits: alpha(3), beta(3), gamma(1), delta(1), epsilon(1). CF(0) has four main subunits: a(1), b(1), b'(1) and c(9-12).

It is found in the plastid. Its subcellular location is the chloroplast thylakoid membrane. The enzyme catalyses ATP + H2O + 4 H(+)(in) = ADP + phosphate + 5 H(+)(out). Its function is as follows. Produces ATP from ADP in the presence of a proton gradient across the membrane. The catalytic sites are hosted primarily by the beta subunits. This Microlepia platyphylla (Plate fern) protein is ATP synthase subunit beta, chloroplastic.